The primary structure comprises 156 residues: ATP synthase subunit b (156 aa).

Residues 13–33 form a helical membrane-spanning segment; it reads AFIIFVWCCMKFVWPPLMAAI.

Belongs to the ATPase B chain family. In terms of assembly, F-type ATPases have 2 components, F(1) - the catalytic core - and F(0) - the membrane proton channel. F(1) has five subunits: alpha(3), beta(3), gamma(1), delta(1), epsilon(1). F(0) has three main subunits: a(1), b(2) and c(10-14). The alpha and beta chains form an alternating ring which encloses part of the gamma chain. F(1) is attached to F(0) by a central stalk formed by the gamma and epsilon chains, while a peripheral stalk is formed by the delta and b chains.

It localises to the cell inner membrane. Its function is as follows. F(1)F(0) ATP synthase produces ATP from ADP in the presence of a proton or sodium gradient. F-type ATPases consist of two structural domains, F(1) containing the extramembraneous catalytic core and F(0) containing the membrane proton channel, linked together by a central stalk and a peripheral stalk. During catalysis, ATP synthesis in the catalytic domain of F(1) is coupled via a rotary mechanism of the central stalk subunits to proton translocation. Component of the F(0) channel, it forms part of the peripheral stalk, linking F(1) to F(0). The chain is ATP synthase subunit b from Aeromonas salmonicida (strain A449).